A 160-amino-acid polypeptide reads, in one-letter code: Troponin C, isoform 2 (160 aa).

4 EF-hand domains span residues 15–50, 51–86, 92–127, and 128–160; these read DQIEQFRKYFNMFDKEGKGYIRATQVGQILRTMGQA, FEERDLKQLIKEFDADGSGEIEFEEFAAMVANFVVN, GLEEELREAFRLYDKEGNGYINVSDLRDILRALDDN, and VSEEELDEMIAEIDADGSGTVDFDEFMEMMSGE. Positions 64, 66, 68, 70, and 75 each coordinate Ca(2+). Ca(2+) contacts are provided by Asp-141, Asp-143, Ser-145, Thr-147, and Glu-152.

It belongs to the troponin C family. In terms of tissue distribution, pharyngeal muscle.

This Caenorhabditis elegans protein is Troponin C, isoform 2 (tnc-2).